The sequence spans 203 residues: Octanoyltransferase (203 aa).

The 172-residue stretch at 32 to 203 (ISTPDEIWLV…LMHKIREIFS (172 aa)) folds into the BPL/LPL catalytic domain. Substrate contacts are provided by residues 71–78 (RGGKITYH), 138–140 (SLG), and 151–153 (GMA). Cysteine 169 (acyl-thioester intermediate) is an active-site residue.

This sequence belongs to the LipB family.

The protein localises to the cytoplasm. It catalyses the reaction octanoyl-[ACP] + L-lysyl-[protein] = N(6)-octanoyl-L-lysyl-[protein] + holo-[ACP] + H(+). It participates in protein modification; protein lipoylation via endogenous pathway; protein N(6)-(lipoyl)lysine from octanoyl-[acyl-carrier-protein]: step 1/2. Catalyzes the transfer of endogenously produced octanoic acid from octanoyl-acyl-carrier-protein onto the lipoyl domains of lipoate-dependent enzymes. Lipoyl-ACP can also act as a substrate although octanoyl-ACP is likely to be the physiological substrate. The chain is Octanoyltransferase from Buchnera aphidicola subsp. Baizongia pistaciae (strain Bp).